Here is a 250-residue protein sequence, read N- to C-terminus: Probable cytokinin riboside 5'-monophosphate phosphoribohydrolase LOGL6 (250 aa).

Substrate contacts are provided by residues E98, 116–117, and 133–139; these read RK and GYGTLEE.

The protein belongs to the LOG family. As to expression, expressed in roots, leaves, stems, tiller buds, shoot apex, immature inflorescences and flowers.

It catalyses the reaction N(6)-(dimethylallyl)adenosine 5'-phosphate + H2O = N(6)-dimethylallyladenine + D-ribose 5-phosphate. The enzyme catalyses 9-ribosyl-trans-zeatin 5'-phosphate + H2O = trans-zeatin + D-ribose 5-phosphate. In terms of biological role, cytokinin-activating enzyme working in the direct activation pathway. Phosphoribohydrolase that converts inactive cytokinin nucleotides to the biologically active free-base forms. This chain is Probable cytokinin riboside 5'-monophosphate phosphoribohydrolase LOGL6 (LOGL6), found in Oryza sativa subsp. japonica (Rice).